A 390-amino-acid polypeptide reads, in one-letter code: Putative 8-amino-7-oxononanoate synthase (390 aa).

Arg-19 serves as a coordination point for substrate. 105 to 106 lines the pyridoxal 5'-phosphate pocket; the sequence is GY. His-130 serves as a coordination point for substrate. Residues Ser-177, 202–205, and 234–237 contribute to the pyridoxal 5'-phosphate site; these read DEAH and TFSK. Lys-237 is modified (N6-(pyridoxal phosphate)lysine). Thr-351 lines the substrate pocket.

Belongs to the class-II pyridoxal-phosphate-dependent aminotransferase family. BioF subfamily. In terms of assembly, homodimer. Requires pyridoxal 5'-phosphate as cofactor.

It catalyses the reaction 6-carboxyhexanoyl-[ACP] + L-alanine + H(+) = (8S)-8-amino-7-oxononanoate + holo-[ACP] + CO2. It functions in the pathway cofactor biosynthesis; biotin biosynthesis. In terms of biological role, catalyzes the decarboxylative condensation of pimeloyl-[acyl-carrier protein] and L-alanine to produce 8-amino-7-oxononanoate (AON), [acyl-carrier protein], and carbon dioxide. The polypeptide is Putative 8-amino-7-oxononanoate synthase (bioF) (Geobacillus kaustophilus (strain HTA426)).